The primary structure comprises 201 residues: Dephospho-CoA kinase (201 aa).

A DPCK domain is found at 3 to 201; the sequence is VIGLTGGIAS…WKERIEKNPR (199 aa). 11–16 lines the ATP pocket; sequence ASGKST.

The protein belongs to the CoaE family.

The protein localises to the cytoplasm. The enzyme catalyses 3'-dephospho-CoA + ATP = ADP + CoA + H(+). It functions in the pathway cofactor biosynthesis; coenzyme A biosynthesis; CoA from (R)-pantothenate: step 5/5. Functionally, catalyzes the phosphorylation of the 3'-hydroxyl group of dephosphocoenzyme A to form coenzyme A. The chain is Dephospho-CoA kinase from Geobacter metallireducens (strain ATCC 53774 / DSM 7210 / GS-15).